A 345-amino-acid polypeptide reads, in one-letter code: 1-aminocyclopropane-1-carboxylate oxidase homolog 7 (345 aa).

Lys-16 is covalently cross-linked (Glycyl lysine isopeptide (Lys-Gly) (interchain with G-Cter in ubiquitin)). A Fe2OG dioxygenase domain is found at 194–293 (KGLHMICHYY…RISIACFFSS (100 aa)). Fe cation-binding residues include His-218, Asp-220, and His-274. Arg-284 contacts 2-oxoglutarate.

The protein belongs to the iron/ascorbate-dependent oxidoreductase family. The cofactor is Fe(2+).

This Arabidopsis thaliana (Mouse-ear cress) protein is 1-aminocyclopropane-1-carboxylate oxidase homolog 7.